We begin with the raw amino-acid sequence, 481 residues long: Probable autolysin LytO (481 aa).

One can recognise a Peptidase C51 domain in the interval 7-148 (KNEFIEWLKT…AYDFPMWFIR (142 aa)). The span at 155–165 (TAPRSVQSPTQ) shows a compositional bias: polar residues. A disordered region spans residues 155–177 (TAPRSVQSPTQAPKKETAKPQPK). The N-acetylmuramoyl-L-alanine amidase domain maps to 198–323 (SNPKGIVIHN…NEFTSTSCPH (126 aa)). The SH3b domain maps to 398-466 (EESARFTNGN…YLPIRTWNGS (69 aa)).

Belongs to the N-acetylmuramoyl-L-alanine amidase 2 family.

The catalysed reaction is Hydrolyzes the link between N-acetylmuramoyl residues and L-amino acid residues in certain cell-wall glycopeptides.. Functionally, has weak lytic activity toward S.aureus cells. This Staphylococcus aureus (strain NCTC 8325 / PS 47) protein is Probable autolysin LytO.